A 532-amino-acid chain; its full sequence is Omega-hydroxyceramide transacylase (532 aa).

The PNPLA domain maps to 16 to 185 (ISFSGSGFLS…TGMQPCAFWT (170 aa)). Positions 51 to 55 (GTSAG) match the GXSXG motif. The active-site Nucleophile is the serine 53. Aspartate 172 acts as the Proton acceptor in catalysis. The short motif at 172 to 174 (DGG) is the DGA/G element. 2 disordered regions span residues 290–457 (PERS…ELGQ) and 489–532 (VTES…SKVQ). Basic and acidic residues predominate over residues 310 to 322 (PHKEWVPKGDGRG). Composition is skewed to low complexity over residues 380–389 (PPSSTPGSSL) and 397–411 (SPLS…SGSP). Residues 517–532 (GFPRHSGSKKPSSKVQ) are compositionally biased toward basic residues.

In terms of tissue distribution, expressed in the digestive system. Expressed in the epidermis of skin keratinocytes. Strongly expressed in the granular layer. Expressed in the upper epidermis and eccrine sweat glands of the dermis and in the region of keratin filament bundles, which is more pronounced in upper epidermal layers and in the lower cornified layers.

It localises to the cytoplasm. The catalysed reaction is an N-(omega-hydroxy-ultra-long chain fatty acyl)-sphingoid base + a (9Z,12Z)-octadecadienoyl-containing triacyl-sn-glycerol = an N-[omega-(9Z,12Z-octadecadienoyloxy)-O-ultra-long chain fatty acyl]-sphingoid base + a diacylglycerol. The enzyme catalyses an N-(omega-hydroxy-ultra-long chain fatty acyl)-sphing-4-enine + a (9Z,12Z)-octadecadienoyl-containing triacyl-sn-glycerol = an N-(omega-(9Z,12Z-octadecadienoyloxy)-ultra-long chain fatty acyl)-sphing-4-enine + a diacylglycerol. It carries out the reaction N-(30-hydroxytriacontanoyl)-sphing-4-enine + 1,2,3-tri-(9Z,12Z)-octadecadienoylglycerol = N-[30-(9Z,12Z-octadecadienoyloxy)-triacontanoyl]-sphing-4-enine + di-(9Z,12Z)-octadecadienoylglycerol. It catalyses the reaction N-(28-hydroxyoctacosanoyl)-sphing-4-enine + a (9Z,12Z)-octadecadienoyl-containing triacyl-sn-glycerol = N-(28-(9Z,12Z-octadecadienoyloxy)-octacosanoyl)-sphing-4-enine + a diacylglycerol. The catalysed reaction is N-(32-hydroxydotriacontanoyl)-sphing-4-enine + a (9Z,12Z)-octadecadienoyl-containing triacyl-sn-glycerol = N-(32-(9Z,12Z-octadecadienoyloxy)-dotricontanoyl)-sphing-4-enine + a diacylglycerol. The enzyme catalyses N-(32-hydroxydotriacontenoyl)-sphing-4-enine + a (9Z,12Z)-octadecadienoyl-containing triacyl-sn-glycerol = an N-(32-(9Z,12Z-octadecadienoyloxy)-dotriacontenoyl)-sphing-4-enine + a diacylglycerol. It carries out the reaction an N-(34-hydroxytetratriacontenoyl)-sphing-4-enine + a (9Z,12Z)-octadecadienoyl-containing triacyl-sn-glycerol = an N-(34-(9Z,12Z-octadecadienoyloxy)-tetratriacontenoyl)-sphing-4-enine + a diacylglycerol. It catalyses the reaction an N-(34-hydroxytetratriacontadienoyl)-sphing-4-enine + a (9Z,12Z)-octadecadienoyl-containing triacyl-sn-glycerol = an N-(34-(9Z,12Z-octadecadienoyloxy)-tetratriacontadienoyl)-sphing-4-enine + a diacylglycerol. The catalysed reaction is an N-(36-hydroxyhexatriacontenoyl)-sphing-4-enine + a (9Z,12Z)-octadecadienoyl-containing triacyl-sn-glycerol = an N-(36-(9Z,12Z-octadecadienoyloxy)-hexatriacontenoyl)-sphing-4-enine + a diacylglycerol. The enzyme catalyses an N-(36-hydroxyhexatriacontadienoyl)-sphing-4-enine + a (9Z,12Z)-octadecadienoyl-containing triacyl-sn-glycerol = an N-(36-(9Z,12Z-octadecadienoyloxy)-hexatriacontadienoyl)-sphing-4-enine + a diacylglycerol. It carries out the reaction an N-(38-hydroxyoctatriacontenoyl)-sphing-4-enine + a (9Z,12Z)-octadecadienoyl-containing triacyl-sn-glycerol = an N-(38-(9Z,12Z-octadecadienoyloxy)-octatriacontenoyl)-sphing-4-enine + a diacylglycerol. In terms of biological role, omega-hydroxyceramide transacylase involved in the synthesis of omega-O-acylceramides (esterified omega-hydroxyacyl-sphingosine; EOS), which are extremely hydrophobic lipids involved in skin barrier formation. Catalyzes the last step of the synthesis of omega-O-acylceramides by transferring linoleic acid from triglycerides to an omega-hydroxyceramide. Omega-O-acylceramides, are required for the biogenesis of lipid lamellae in the stratum corneum and the formation of the cornified lipid envelope which are essential for the epidermis barrier function. These lipids also play a role in keratinocyte differentiation. May also act on omega-hydroxylated ultra-long chain fatty acids (omega-OH ULCFA) and acylglucosylceramides (GlcEOS). This chain is Omega-hydroxyceramide transacylase, found in Homo sapiens (Human).